The following is a 654-amino-acid chain: Smc-like protein Sph3 (654 aa).

Coiled-coil stretches lie at residues 135 to 290 (TDAI…LQTV) and 341 to 503 (IRGT…LTAA).

This sequence belongs to the Sph1/Sph2 family.

Its function is as follows. Involved in cell-shape determination. Required for the formation of rods and wild-type-like motility. The polypeptide is Smc-like protein Sph3 (Haloferax volcanii (strain ATCC 29605 / DSM 3757 / JCM 8879 / NBRC 14742 / NCIMB 2012 / VKM B-1768 / DS2) (Halobacterium volcanii)).